The following is a 1203-amino-acid chain: DNA-directed RNA polymerase subunit beta' (1203 aa).

Residues C60, C62, C75, and C78 each coordinate Zn(2+). D449, D451, and D453 together coordinate Mg(2+). Residues C818, C892, C899, and C902 each contribute to the Zn(2+) site.

Belongs to the RNA polymerase beta' chain family. The RNAP catalytic core consists of 2 alpha, 1 beta, 1 beta' and 1 omega subunit. When a sigma factor is associated with the core the holoenzyme is formed, which can initiate transcription. Mg(2+) serves as cofactor. The cofactor is Zn(2+).

The catalysed reaction is RNA(n) + a ribonucleoside 5'-triphosphate = RNA(n+1) + diphosphate. Functionally, DNA-dependent RNA polymerase catalyzes the transcription of DNA into RNA using the four ribonucleoside triphosphates as substrates. In Bacillus thuringiensis (strain Al Hakam), this protein is DNA-directed RNA polymerase subunit beta'.